The primary structure comprises 161 residues: Ribosome maturation factor RimP (161 aa).

This sequence belongs to the RimP family.

It is found in the cytoplasm. In terms of biological role, required for maturation of 30S ribosomal subunits. The polypeptide is Ribosome maturation factor RimP (Janthinobacterium sp. (strain Marseille) (Minibacterium massiliensis)).